Consider the following 351-residue polypeptide: Thiamine-phosphate synthase (351 aa).

A unknown region spans residues 1-129 (MVEPYSQQKQ…GQACKQMRYR (129 aa)). Positions 130 to 351 (VYSLETNLMG…SQLNRIKPES (222 aa)) are thiamine-phosphate synthase. Residues 177–181 (QYRDK) and Asn-209 contribute to the 4-amino-2-methyl-5-(diphosphooxymethyl)pyrimidine site. Mg(2+) contacts are provided by Asp-210 and Asp-229. Ser-248 is a 4-amino-2-methyl-5-(diphosphooxymethyl)pyrimidine binding site. 274–276 (TPT) contacts 2-[(2R,5Z)-2-carboxy-4-methylthiazol-5(2H)-ylidene]ethyl phosphate. Lys-277 contributes to the 4-amino-2-methyl-5-(diphosphooxymethyl)pyrimidine binding site. Gly-304 is a 2-[(2R,5Z)-2-carboxy-4-methylthiazol-5(2H)-ylidene]ethyl phosphate binding site.

Belongs to the thiamine-phosphate synthase family. Mg(2+) is required as a cofactor.

The enzyme catalyses 2-[(2R,5Z)-2-carboxy-4-methylthiazol-5(2H)-ylidene]ethyl phosphate + 4-amino-2-methyl-5-(diphosphooxymethyl)pyrimidine + 2 H(+) = thiamine phosphate + CO2 + diphosphate. It catalyses the reaction 2-(2-carboxy-4-methylthiazol-5-yl)ethyl phosphate + 4-amino-2-methyl-5-(diphosphooxymethyl)pyrimidine + 2 H(+) = thiamine phosphate + CO2 + diphosphate. It carries out the reaction 4-methyl-5-(2-phosphooxyethyl)-thiazole + 4-amino-2-methyl-5-(diphosphooxymethyl)pyrimidine + H(+) = thiamine phosphate + diphosphate. Its pathway is cofactor biosynthesis; thiamine diphosphate biosynthesis; thiamine phosphate from 4-amino-2-methyl-5-diphosphomethylpyrimidine and 4-methyl-5-(2-phosphoethyl)-thiazole: step 1/1. Functionally, condenses 4-methyl-5-(beta-hydroxyethyl)thiazole monophosphate (THZ-P) and 2-methyl-4-amino-5-hydroxymethyl pyrimidine pyrophosphate (HMP-PP) to form thiamine monophosphate (TMP). This chain is Thiamine-phosphate synthase, found in Nostoc sp. (strain PCC 7120 / SAG 25.82 / UTEX 2576).